A 538-amino-acid chain; its full sequence is Fusion glycoprotein F0 (538 aa).

Positions 1 to 19 are cleaved as a signal peptide; that stretch reads MKAFSVTCLGFAVFSSSIC. The Extracellular portion of the chain corresponds to 20–482; sequence VNINILQQIG…QLLSVSVNSK (463 aa). Asn56 and Asn73 each carry an N-linked (GlcNAc...) asparagine; by host glycan. Positions 103-127 are fusion peptide; the sequence is FAGIAIGIAALGVATAAQVTAAVSL. Positions 128–156 form a coiled coil; sequence VQAQTNARAIAAMKNSIQATNRAIFEVKE. N-linked (GlcNAc...) asparagine; by host glycosylation occurs at Asn182. 4 disulfide bridges follow: Cys324-Cys333, Cys348-Cys356, Cys380-Cys385, and Cys387-Cys410. The N-linked (GlcNAc...) asparagine; by host glycan is linked to Asn352. N-linked (GlcNAc...) asparagine; by host glycosylation is found at Asn427, Asn433, and Asn457. Residues 452 to 477 are a coiled coil; the sequence is ELSKVNASLQNAVKYIKESNHQLLSV. The chain crosses the membrane as a helical span at residues 483–503; it reads IGAIIVTALVLSILSIIISLL. The Cytoplasmic segment spans residues 504–538; the sequence is FCCWAYIATKEIRRINFKTNHINTISSSVDDLIRY.

This sequence belongs to the paramyxoviruses fusion glycoprotein family. In terms of assembly, homotrimer; disulfide-linked F1-F2. Interacts with host LAMP1; LAMP2 and LAMP3; these interactions promote the cleavage of the viral fusion protein F. The inactive precursor F0 is glycosylated and proteolytically cleaved into F1 and F2 to be functionally active. The cleavage is mediated by cellular proteases including host FURIN during the transport and maturation of the polypeptide.

Its subcellular location is the virion membrane. It is found in the host cell membrane. Its function is as follows. Class I viral fusion protein. Under the current model, the protein has at least 3 conformational states: pre-fusion native state, pre-hairpin intermediate state, and post-fusion hairpin state. During viral and plasma cell membrane fusion, the heptad repeat (HR) regions assume a trimer-of-hairpins structure, positioning the fusion peptide in close proximity to the C-terminal region of the ectodomain. The formation of this structure appears to drive apposition and subsequent fusion of viral and plasma cell membranes. Directs fusion of viral and cellular membranes leading to delivery of the nucleocapsid into the cytoplasm. This fusion is pH independent and occurs directly at the outer cell membrane. The trimer of F1-F2 (F protein) probably interacts with HN at the virion surface. Upon HN binding to its cellular receptor, the hydrophobic fusion peptide is unmasked and interacts with the cellular membrane, inducing the fusion between cell and virion membranes. Later in infection, F proteins expressed at the plasma membrane of infected cells could mediate fusion with adjacent cells to form syncytia, a cytopathic effect that could lead to tissue necrosis. This Homo sapiens (Human) protein is Fusion glycoprotein F0 (F).